The following is an 80-amino-acid chain: Acyl carrier protein (80 aa).

A Carrier domain is found at 2–77 (SDIEQRVKKI…QAIDYAKAHV (76 aa)). Ser37 is subject to O-(pantetheine 4'-phosphoryl)serine.

Belongs to the acyl carrier protein (ACP) family. Post-translationally, 4'-phosphopantetheine is transferred from CoA to a specific serine of apo-ACP by AcpS. This modification is essential for activity because fatty acids are bound in thioester linkage to the sulfhydryl of the prosthetic group.

The protein localises to the cytoplasm. Its pathway is lipid metabolism; fatty acid biosynthesis. In terms of biological role, carrier of the growing fatty acid chain in fatty acid biosynthesis. This Herminiimonas arsenicoxydans protein is Acyl carrier protein.